A 580-amino-acid polypeptide reads, in one-letter code: High affinity choline transporter 1 (580 aa).

Topologically, residues 1–6 (MSFHVE) are extracellular. A helical transmembrane segment spans residues 7–27 (GLVAIILFYLLIFLVGIWAAW). Over 28–48 (KTKNSGNPEERSEAIIVGGRD) the chain is Cytoplasmic. The helical transmembrane segment at 49–69 (IGLLVGGFTMTATWVGGGYIN) threads the bilayer. Residues 70 to 81 (GTAEAVYGPGCG) are Extracellular-facing. A helical membrane pass occupies residues 82-102 (LAWAQAPIGYSLSLILGGLFF). At 103–125 (AKPMRSKGYVTMLDPFQQIYGKR) the chain is on the cytoplasmic side. A helical transmembrane segment spans residues 126–146 (MGGLLFIPALMGEMFWAAAIF). At 147–164 (SALGATISVIIDVDVNIS) the chain is on the extracellular side. A helical transmembrane segment spans residues 165 to 185 (VIVSALIAILYTLVGGLYSVA). Residues 186–191 (YTDVVQ) lie on the Cytoplasmic side of the membrane. Residues 192–212 (LFCIFIGLWISVPFALSHPAV) traverse the membrane as a helical segment. At 213 to 237 (TDIGFTAVHAKYQSPWLGTIESVEV) the chain is on the extracellular side. The chain crosses the membrane as a helical span at residues 238–258 (YTWLDNFLLLMLGGIPWQAYF). At 259-274 (QRVLSSSSATYAQVLS) the chain is on the cytoplasmic side. Residues 275-295 (FLAAFGCLVMALPAICIGAIG) form a helical membrane-spanning segment. Residues 296 to 317 (ASTDWNQTAYGYPDPKTKEEAD) are Extracellular-facing. Asparagine 301 carries an N-linked (GlcNAc...) asparagine glycan. A helical membrane pass occupies residues 318–338 (MILPIVLQYLCPVYISFFGLG). The Cytoplasmic segment spans residues 339–376 (AVSAAVMSSADSSILSASSMFARNIYQLSFRQNASDKE). Residues 377–397 (IVWVMRITVLVFGASATAMAL) traverse the membrane as a helical segment. Residues 398–406 (LTKTVYGLW) lie on the Extracellular side of the membrane. The chain crosses the membrane as a helical span at residues 407-427 (YLSSDLVYIIIFPQLLCVLFI). The Cytoplasmic segment spans residues 428–435 (KGTNTYGA). The chain crosses the membrane as a helical span at residues 436–456 (VAGYIFGLFLRITGGEPYLYL). At 457–481 (QPLIFYPGYYSDKNGIYNQRFPFKT) the chain is on the extracellular side. Residues 482–502 (LSMVTSFFTNICVSYLAKYLF) form a helical membrane-spanning segment. The tract at residues 502 to 580 (FESGTLPPKL…EGSGTEDNLQ (79 aa)) is mediates interaction with SEC14L1. The Cytoplasmic portion of the chain corresponds to 503-580 (ESGTLPPKLD…EGSGTEDNLQ (78 aa)). A Dileucine-like motif motif is present at residues 527–532 (DKTILV).

Belongs to the sodium:solute symporter (SSF) (TC 2.A.21) family. As to quaternary structure, homooligomerizes at cell surface. Interacts with SEC14L1; may regulate SLC5A7. In terms of processing, phosphorylated by PKC and dephosphorylated by PP1/PP2A. In terms of tissue distribution, found in spinal cord, brain-stem, mid-brain and striatum. Specific for cholinergic neurons.

It localises to the presynaptic cell membrane. It is found in the cell projection. Its subcellular location is the axon. The protein localises to the early endosome membrane. The protein resides in the cytoplasmic vesicle. It localises to the secretory vesicle. It is found in the synaptic vesicle membrane. It catalyses the reaction choline(out) + n Na(+)(out) = choline(in) + n Na(+)(in). With respect to regulation, choline uptake activity is regulated by SLC5A7/CHT1 internalization (inactive form) from the cell surface and recycling of internalized SLC5A7/CHT1 into the cell surface (active form). Activated by extracellular chloride ion. Specifically inhibited by nanomolar concentrations of hemicholinium 3. Functionally, high-affinity Na(+)-coupled choline transmembrane symporter. Functions as an electrogenic, voltage-dependent transporter with variable charge/choline stoichiometry. Choline uptake and choline-induced current is also Cl(-)-dependent where Cl(-) is likely a regulatory ion rather than cotransported ion. Plays a critical role in acetylcholine (ACh) synthesis by taking up the substrate choline from the synaptic cleft into the presynaptic nerve terminals after neurotransmitter release. SLC5A7/CHT1-mediated choline high-affinity transport in cholinergic neurons is the rate-limiting step for production of ACh, thereby facilitating communication by subsequent action potentials. Localized predominantly in presynaptic terminal intracellular organelles, and translocated to the plasma membrane in active form in response to neuronal activity. This chain is High affinity choline transporter 1, found in Mus musculus (Mouse).